The following is a 300-amino-acid chain: Ribosomal RNA small subunit methyltransferase H (300 aa).

Residues 46–48 (GGH), D65, F92, D107, and Q114 each bind S-adenosyl-L-methionine.

Belongs to the methyltransferase superfamily. RsmH family.

The protein localises to the cytoplasm. The catalysed reaction is cytidine(1402) in 16S rRNA + S-adenosyl-L-methionine = N(4)-methylcytidine(1402) in 16S rRNA + S-adenosyl-L-homocysteine + H(+). In terms of biological role, specifically methylates the N4 position of cytidine in position 1402 (C1402) of 16S rRNA. The chain is Ribosomal RNA small subunit methyltransferase H from Prochlorococcus marinus (strain MIT 9515).